The sequence spans 335 residues: Glyceraldehyde-3-phosphate dehydrogenase 2 (335 aa).

NAD(+) contacts are provided by residues 13–14 (RI), D34, and M79. Residues 151-153 (SCT), T182, 211-212 (TG), and R234 each bind D-glyceraldehyde 3-phosphate. C152 serves as the catalytic Nucleophile. N316 contributes to the NAD(+) binding site.

Belongs to the glyceraldehyde-3-phosphate dehydrogenase family. Homotetramer.

The protein resides in the cytoplasm. The enzyme catalyses D-glyceraldehyde 3-phosphate + phosphate + NAD(+) = (2R)-3-phospho-glyceroyl phosphate + NADH + H(+). It functions in the pathway carbohydrate degradation; glycolysis; pyruvate from D-glyceraldehyde 3-phosphate: step 1/5. Glyceraldehyde-3-phosphate dehydrogenase is a key enzyme in glycolysis that catalyzes the first step of the pathway by converting D-glyceraldehyde 3-phosphate (G3P) into 3-phospho-D-glyceroyl phosphate. This chain is Glyceraldehyde-3-phosphate dehydrogenase 2 (gapdh-2), found in Danio rerio (Zebrafish).